The following is a 257-amino-acid chain: Protein patched homolog 1 (257 aa).

Topologically, residues 1 to 199 (AKLQTGTAYL…LDDILKSFSD (199 aa)) are extracellular. 3 N-linked (GlcNAc...) asparagine glycosylation sites follow: N75, N114, and N177. The helical transmembrane segment at 200–220 (ISVIRVASGYLLMLAYACLTM) threads the bilayer. The 57-residue stretch at 201–257 (SVIRVASGYLLMLAYACLTMLRWDCAKSQGAVGLAGVLLVALSVAAGLGLCSLIGIS) folds into the SSD domain. Residues 221 to 235 (LRWDCAKSQGAVGLA) lie on the Cytoplasmic side of the membrane. Residues 236–256 (GVLLVALSVAAGLGLCSLIGI) traverse the membrane as a helical segment.

The protein belongs to the patched family. In terms of processing, glycosylation is necessary for SHH binding. As to expression, in the eye, detected in neural retina, iris, retinal pigment epithelium, but not in lens.

The protein resides in the membrane. Its function is as follows. Acts as a receptor for sonic hedgehog (SHH), indian hedgehog (IHH) and desert hedgehog (DHH). Associates with the smoothened protein (SMO) to transduce the hedgehog's proteins signal. This Cynops pyrrhogaster (Japanese fire-bellied newt) protein is Protein patched homolog 1 (PTC1).